A 208-amino-acid chain; its full sequence is Mitochondrial import inner membrane translocase subunit Tim23 (208 aa).

A run of 3 helical transmembrane segments spans residues 73–93, 125–145, and 173–193; these read FELA…FGTL, ASWA…GVAI, and GLKG…LYAL.

Belongs to the Tim17/Tim22/Tim23 family. In terms of assembly, component of the TIM23 complex at least composed of timm23, timm17 and timm50. The complex interacts with the timm44 component of the PAM complex.

Its subcellular location is the mitochondrion inner membrane. In terms of biological role, essential component of the TIM23 complex, a complex that mediates the translocation of transit peptide-containing proteins across the mitochondrial inner membrane. Plays an essential role in early embryonic development. This is Mitochondrial import inner membrane translocase subunit Tim23 (timm23) from Danio rerio (Zebrafish).